Here is a 303-residue protein sequence, read N- to C-terminus: Bifunctional protein FolD (303 aa).

NADP(+) contacts are provided by residues 175-177 (GVS) and isoleucine 243.

The protein belongs to the tetrahydrofolate dehydrogenase/cyclohydrolase family. As to quaternary structure, homodimer.

The enzyme catalyses (6R)-5,10-methylene-5,6,7,8-tetrahydrofolate + NADP(+) = (6R)-5,10-methenyltetrahydrofolate + NADPH. It catalyses the reaction (6R)-5,10-methenyltetrahydrofolate + H2O = (6R)-10-formyltetrahydrofolate + H(+). It functions in the pathway one-carbon metabolism; tetrahydrofolate interconversion. Catalyzes the oxidation of 5,10-methylenetetrahydrofolate to 5,10-methenyltetrahydrofolate and then the hydrolysis of 5,10-methenyltetrahydrofolate to 10-formyltetrahydrofolate. The sequence is that of Bifunctional protein FolD from Xanthomonas oryzae pv. oryzae (strain PXO99A).